The sequence spans 197 residues: Phosphoheptose isomerase (197 aa).

The SIS domain occupies 36 to 197 (MVNALLNEGK…IDSQLFGSEE (162 aa)). 51–53 (NGG) is a substrate binding site. Zn(2+) contacts are provided by His60 and Glu64. Substrate is bound by residues Glu64, 93–94 (ND), 119–121 (STS), Ser124, and Gln174. Gln174 and His182 together coordinate Zn(2+).

Belongs to the SIS family. GmhA subfamily. As to quaternary structure, homotetramer. The cofactor is Zn(2+).

It is found in the cytoplasm. It carries out the reaction 2 D-sedoheptulose 7-phosphate = D-glycero-alpha-D-manno-heptose 7-phosphate + D-glycero-beta-D-manno-heptose 7-phosphate. The protein operates within carbohydrate biosynthesis; D-glycero-D-manno-heptose 7-phosphate biosynthesis; D-glycero-alpha-D-manno-heptose 7-phosphate and D-glycero-beta-D-manno-heptose 7-phosphate from sedoheptulose 7-phosphate: step 1/1. In terms of biological role, catalyzes the isomerization of sedoheptulose 7-phosphate in D-glycero-D-manno-heptose 7-phosphate. This chain is Phosphoheptose isomerase, found in Pseudomonas fluorescens (strain Pf0-1).